A 520-amino-acid polypeptide reads, in one-letter code: Pleckstrin homology domain-containing family O member 1-A (520 aa).

4 disordered regions span residues Met-1 to Lys-23, Ser-208 to Gln-296, Ile-313 to Asp-439, and Gln-497 to Pro-520. In terms of domain architecture, PH spans Gln-20 to Thr-131. Over residues Pro-227–Pro-241 the composition is skewed to polar residues. 2 stretches are compositionally biased toward basic and acidic residues: residues Arg-242–Arg-255 and Asp-333–His-347. Low complexity predominate over residues Ser-348 to Ser-361. Basic and acidic residues-rich tracts occupy residues Arg-363–Arg-385 and Lys-396–His-418. Residues Lys-420 to Asp-439 show a composition bias toward polar residues. A compositionally biased stretch (basic and acidic residues) spans Gln-497–Ser-506. A compositionally biased stretch (polar residues) spans Gly-509 to Pro-520.

Post-translationally, C-terminal fragments could be released during apoptosis via caspase-3-dependent cleavage.

The protein localises to the membrane. It localises to the nucleus. It is found in the cytoplasm. In terms of biological role, plays a role in the regulation of the actin cytoskeleton through its interactions with actin capping protein (CP). This Danio rerio (Zebrafish) protein is Pleckstrin homology domain-containing family O member 1-A (plekho1a).